Here is a 950-residue protein sequence, read N- to C-terminus: MAKQTNYAQPWSQFYGPNLGYVIEMYEQYLDDPNSIDPELKQLFEQWGAPVLEEPVSPADDETAKTHQTFRLPETPTIFSKLVAAVKLADSIRHYGHLVADTNPLVKKEKKLRRLELDEYDLTEEDLKRIPVAFLCPHAPAHVKNGWDAILHLRKIYTDKIAFEFSQVHNLEERNWLIQQIESGAYYPSLANKERVALLRRLTEVEGFEKFIHRTYVGQKRFSIEGLDSMVPLLDELVRQAIEHEIDAVNIGMAHRGRLNVLAHVLGKPYEMIFAEFQHAESKNFIPSEGSVAITYGWTGDVKYHLGAARRLRNQSAHTMRITLANNPSHLEVVNPVVLGYTRAAQEDRTKPGVPVQNTDASFAILIHGDAAFPGQGIVAETLNLSQLRGYTTGGTIHIIANNMIGFTTESYDSRSTTYASDMAKGFEVPIVHVNADDPEACLAAACLAFAYRQRFKKDFVIDLIGYRRFGHNEMDEPMATNPTMYAIINQHPTVRKLYAQKLMEKGIITEREVDEMEQEVAERLKIAYERVPKNEDELDFIMDPPKPVVDRLPEVKTSVAKDVLHRVNEELLQFPDGFNVFNKLERILKRRSGVFAQNGKVDWAHAEILAFATILQDGVPIRLTGQDSQRGTFAQRHLVLHDVKTGEEYVPLHHISGAKASFVVYNSPLTEAAVLGYEYGYNVYAPETLVLWEAQFGDFANMAQVMFDQFISSGRAKWGQKSGLVMLLPHGYEGQGPEHSSGRVERFLQLAAENNWTVANLSTAAQYFHILRRQAALLTREEVRPLIIMTPKSLLRHPLAASDAEVFVDGAFSPVLEQPGLGADAGKVERIVFGTGKLMIDLAEQIGKMESLDWLHIVRIEELYPFPEEAVKDIIARYPNVKELVWVQEEPKNMGAWLYMEPRLRALAPEGVDVSYIGRRRRASPAEGDPVVHRKEQERIIRCALTKHE.

This sequence belongs to the alpha-ketoglutarate dehydrogenase family. In terms of assembly, homodimer. Part of the 2-oxoglutarate dehydrogenase (OGDH) complex composed of E1 (2-oxoglutarate dehydrogenase), E2 (dihydrolipoamide succinyltransferase) and E3 (dihydrolipoamide dehydrogenase); the complex contains multiple copies of the three enzymatic components (E1, E2 and E3). Requires thiamine diphosphate as cofactor.

It catalyses the reaction N(6)-[(R)-lipoyl]-L-lysyl-[protein] + 2-oxoglutarate + H(+) = N(6)-[(R)-S(8)-succinyldihydrolipoyl]-L-lysyl-[protein] + CO2. Its function is as follows. E1 component of the 2-oxoglutarate dehydrogenase (OGDH) complex which catalyzes the decarboxylation of 2-oxoglutarate, the first step in the conversion of 2-oxoglutarate to succinyl-CoA and CO(2). This Geobacillus kaustophilus (strain HTA426) protein is 2-oxoglutarate dehydrogenase E1 component.